The primary structure comprises 248 residues: NLP effector protein Pc121494 (248 aa).

An N-terminal signal peptide occupies residues 1 to 19 (MKFIAVLIAAIASLSAVQA). Residues 124–130 (GHRNGWE) carry the Hepta-peptide GHRHDWE motif motif. Residue Asn143 is glycosylated (N-linked (GlcNAc...) asparagine).

This sequence belongs to the Necrosis inducing protein (NPP1) family.

The protein localises to the secreted. Its function is as follows. Secreted effector that contributes strongly to virulence during infection by P.capsici. The sequence is that of NLP effector protein Pc121494 from Phytophthora capsici.